Reading from the N-terminus, the 77-residue chain is MKLMIFTGLFLFAIVSLIEAQAENEKPCLPEYKVCTHAPGNCCSDLVCDCYGRYKSGAQIGRNCFCLQKGVIYKREN.

An N-terminal signal peptide occupies residues 1–20 (MKLMIFTGLFLFAIVSLIEA). The propeptide occupies 21 to 26 (QAENEK).

It belongs to the neurotoxin 19 (CSTX) family. 08 (U8-Lctx) subfamily. Contains 4 disulfide bonds. Expressed by the venom gland.

Its subcellular location is the secreted. In Lycosa singoriensis (Wolf spider), this protein is U8-lycotoxin-Ls1m.